We begin with the raw amino-acid sequence, 432 residues long: Keratin, type I cytoskeletal 17 (432 aa).

Residues 1–24 (MTTTIRQFTSSSSIKGSSGLGGGS) are disordered. The interval 1–83 (MTTTIRQFTS…GGVDGLLAGG (83 aa)) is head. Serine 12 and serine 13 each carry phosphoserine. Lysine 15 is covalently cross-linked (Glycyl lysine isopeptide (Lys-Gly) (interchain with G-Cter in SUMO1); alternate). Lysine 15 participates in a covalent cross-link: Glycyl lysine isopeptide (Lys-Gly) (interchain with G-Cter in SUMO2); alternate. Phosphoserine occurs at positions 25, 32, and 39. Serine 44 carries the post-translational modification Phosphoserine; by RPS6KA1. A coil 1A region spans residues 84 to 120 (EKATMQNLNDRLASYLDKVRALEEANTELEVKIRDWY). The 312-residue stretch at 84–395 (EKATMQNLND…RLLEGEDAHL (312 aa)) folds into the IF rod domain. Residue threonine 110 is modified to Phosphothreonine. The segment at 121 to 138 (QRQAPGPARDYSQYYRTI) is linker 1. A coil 1B region spans residues 139-230 (EELQNKILTA…NHEEEMNALR (92 aa)). Residues 231-250 (GQVGGEINVEMDAAPGVDLS) form a linker 12 region. The segment at 251-392 (RILNEMRDQY…TYRRLLEGED (142 aa)) is coil 2. A Glycyl lysine isopeptide (Lys-Gly) (interchain with G-Cter in SUMO2) cross-link involves residue lysine 278. At threonine 279 the chain carries Phosphothreonine. Serine 323 is subject to Phosphoserine. Residues 393 to 432 (AHLTQYKKEPVTTRQVRTIVEEVQDGKVISSREQVHQTTR) form a tail region. Glycyl lysine isopeptide (Lys-Gly) (interchain with G-Cter in SUMO1); alternate cross-links involve residues lysine 399, lysine 400, and lysine 419. Glycyl lysine isopeptide (Lys-Gly) (interchain with G-Cter in SUMO2); alternate cross-links involve residues lysine 399, lysine 400, and lysine 419.

It belongs to the intermediate filament family. As to quaternary structure, heterodimer of a type I and a type II keratin. KRT17 associates with KRT6 isomers (KRT6A or KRT6B). Interacts with TRADD and SFN. Post-translationally, phosphorylation at Ser-44 occurs in a growth- and stress-dependent fashion in skin keratinocytes, it has no effect on filament organization.

It localises to the cytoplasm. Type I keratin involved in the formation and maintenance of various skin appendages, specifically in determining shape and orientation of hair. Required for the correct growth of hair follicles, in particular for the persistence of the anagen (growth) state. Modulates the function of TNF-alpha in the specific context of hair cycling. Regulates protein synthesis and epithelial cell growth through binding to the adapter protein SFN and by stimulating Akt/mTOR pathway. Involved in tissue repair. May be a marker of basal cell differentiation in complex epithelia and therefore indicative of a certain type of epithelial 'stem cells'. Acts as a promoter of epithelial proliferation by acting a regulator of immune response in skin: promotes Th1/Th17-dominated immune environment contributing to the development of basaloid skin tumors. May act as an autoantigen in the immunopathogenesis of psoriasis, with certain peptide regions being a major target for autoreactive T-cells and hence causing their proliferation. The protein is Keratin, type I cytoskeletal 17 of Pan troglodytes (Chimpanzee).